A 108-amino-acid chain; its full sequence is Insulin (108 aa).

A signal peptide spans 1–21; sequence MAVWIQAGALLFLLAVSSVNA. 3 disulfides stabilise this stretch: C30-C94, C42-C107, and C93-C98. Residues 54–85 constitute a propeptide, c peptide; it reads DVDPPLGFLPPKSAQETEVADFAFKDHAEVIR.

The protein belongs to the insulin family. Heterodimer of a B chain and an A chain linked by two disulfide bonds.

The protein resides in the secreted. In terms of biological role, insulin decreases blood glucose concentration. It increases cell permeability to monosaccharides, amino acids and fatty acids. It accelerates glycolysis, the pentose phosphate cycle, and glycogen synthesis in liver. The protein is Insulin (ins) of Cyprinus carpio (Common carp).